A 108-amino-acid chain; its full sequence is Structural protein 1 (108 aa).

The Intravirion segment spans residues 1 to 77; the sequence is MSRVSEYGVP…LKMQMDRLCN (77 aa). The helical; Signal-anchor for type II membrane protein transmembrane segment at 78 to 98 threads the bilayer; the sequence is VLGVVLQMATLALVTYIAFVV. Over 99 to 108 the chain is Virion surface; the sequence is HTRATSCKRE.

It belongs to the varicellovirus ORF1 protein family. As to quaternary structure, homodimer. In terms of processing, phosphorylated.

The protein resides in the virion membrane. It localises to the host Golgi apparatus membrane. The protein is Structural protein 1 of Homo sapiens (Human).